A 629-amino-acid chain; its full sequence is Methyl-accepting chemotaxis protein PscA (629 aa).

Residues 1–9 (MKNLGFSKK) are Cytoplasmic-facing. A helical transmembrane segment spans residues 10–30 (ILLAAALIVVVAFSVFIVIND). Residues 31 to 276 (YRQRQSLKSS…AYAMLTEFRT (246 aa)) lie on the Periplasmic side of the membrane. Residues 36 to 258 (SLKSSVKSEL…QGVATANWYV (223 aa)) form the Cache domain. The chain crosses the membrane as a helical span at residues 277–297 (SAITAMVVVVMVIILLLGPLI). In terms of domain architecture, HAMP spans 298 to 352 (RVLMQPLHQMGRAMRDIADGEGDLTKRLAITSHDEFGALAESFNHFVERIHTSIR). Over 298–629 (RVLMQPLHQM…LQQLVGSFRI (332 aa)) the chain is Cytoplasmic. The 237-residue stretch at 357–593 (TAAQLGEVAT…SINVDITHIN (237 aa)) folds into the Methyl-accepting transducer domain.

It belongs to the methyl-accepting chemotaxis (MCP) protein family.

The protein localises to the cell inner membrane. Its function is as follows. Chemotactic-signal transducers respond to changes in the concentration of attractants and repellents in the environment, transduce a signal from the outside to the inside of the cell, and facilitate sensory adaptation through the variation of the level of methylation. PscA recognizes specifically and with high affinity L-Asp, D-Asp and L-Glu. It exerts a double function, in mediating chemotaxis to these amino acids and in modulating cyclic di-GMP (c-di-GMP) levels, causing alterations in biofilm development. Plays a key role in the infection process. It may facilitate bacterial entry into the plant. In Pseudomonas syringae pv. tomato (strain ATCC BAA-871 / DC3000), this protein is Methyl-accepting chemotaxis protein PscA.